The primary structure comprises 629 residues: MQTYDAGTFDVIVVGAGHAGVEAGLASGRMGAKTLMLTINLDMVAFMPCNPSVGGPAKGVVVREIDALGGEMGRNTDKTYIQMRMLNTGKGPAVRALRAQADKWDYQHEMKHTIEKEENITLRQGLVDHLVIEDGVCKGVITNSGAIYYAKTVVITTGTFSRGEIIVGELRYSSGPNNQQPSVKLSEHLEELGFELRRFKTGTPPRVKSSTIDYSKTEEQPGDDHPRAFSFDTVDMMLDQLPCWLTYTNETTHEIIQANLHRSPMFTATKKGTGARYCPSIEDKIVRFSDKPRHQIFLEPEGKNTEEVYVQGLSTSLPEEVQREMLRTIPGLENVEMMRVGYAIEYDAVMPDQLWPSLETKLVEGLFTAGQINGTSGYEEAAGQGLMAGINAARKVFDKEPIILGRDQAYIGVLIDDLVTKGTEEPYRLLTSRAEYRLLLRHDNADLRLTEIGHEIGLISDERYERFLAKQSAIEAEKERLQKTRIKPTAEVQAMLKEIGSGELKDGILAADLLRRPEITYDKIAQIVSRETFITDEIAEQVEIQVKYEGYIQKSNLQVEKMKRMEDKKIPENIDYDAISGLATEALEKLKKIEPLSIAQASRISGVNPADISILLVYIEQGKIAKISK.

Residues 15–20, V127, and S182 each bind FAD; that span reads GAGHAG. Residues 203–227 form a disordered region; it reads TPPRVKSSTIDYSKTEEQPGDDHPR. Residues 215–227 show a composition bias toward basic and acidic residues; that stretch reads SKTEEQPGDDHPR. NAD(+) is bound at residue 274–288; sequence GARYCPSIEDKIVRF. Q371 provides a ligand contact to FAD.

This sequence belongs to the MnmG family. In terms of assembly, homodimer. Heterotetramer of two MnmE and two MnmG subunits. It depends on FAD as a cofactor.

The protein resides in the cytoplasm. Functionally, NAD-binding protein involved in the addition of a carboxymethylaminomethyl (cmnm) group at the wobble position (U34) of certain tRNAs, forming tRNA-cmnm(5)s(2)U34. In Listeria welshimeri serovar 6b (strain ATCC 35897 / DSM 20650 / CCUG 15529 / CIP 8149 / NCTC 11857 / SLCC 5334 / V8), this protein is tRNA uridine 5-carboxymethylaminomethyl modification enzyme MnmG.